A 106-amino-acid chain; its full sequence is Thioredoxin-2 (106 aa).

One can recognise a Thioredoxin domain in the interval 2 to 106 (VYQIKDKADL…RLEDVIKANI (105 aa)). Active-site nucleophile residues include Cys-32 and Cys-35. Cysteines 32 and 35 form a disulfide.

It belongs to the thioredoxin family.

Participates in various redox reactions through the reversible oxidation of its active center dithiol to a disulfide and catalyzes dithiol-disulfide exchange reactions. As a reducing substrate of peroxiredoxin 1, thioredoxin 2 is preferred over thioredoxin 1. In Drosophila yakuba (Fruit fly), this protein is Thioredoxin-2.